Consider the following 382-residue polypeptide: Putative oxidoreductase C1F5.03c (382 aa).

Residues 7 to 27 (IVIVGGGITGVSCLYFLAHHP) form a helical membrane-spanning segment.

Belongs to the TDA3 family.

It is found in the cytoplasm. The protein localises to the membrane. In terms of biological role, putative oxidoreductase that negatively regulates the retrieval of cargo from late endosomes to the Golgi. The protein is Putative oxidoreductase C1F5.03c of Schizosaccharomyces pombe (strain 972 / ATCC 24843) (Fission yeast).